A 520-amino-acid chain; its full sequence is Peptide chain release factor 3 (520 aa).

One can recognise a tr-type G domain in the interval 8-273; sequence ESRKTFAIIS…AYVDHAPMPN (266 aa). GTP contacts are provided by residues 17–24, 85–89, and 139–142; these read SHPDAGKT, DTPGH, and NKLD.

This sequence belongs to the TRAFAC class translation factor GTPase superfamily. Classic translation factor GTPase family. PrfC subfamily.

The protein localises to the cytoplasm. Increases the formation of ribosomal termination complexes and stimulates activities of RF-1 and RF-2. It binds guanine nucleotides and has strong preference for UGA stop codons. It may interact directly with the ribosome. The stimulation of RF-1 and RF-2 is significantly reduced by GTP and GDP, but not by GMP. The chain is Peptide chain release factor 3 from Staphylococcus carnosus (strain TM300).